Here is a 402-residue protein sequence, read N- to C-terminus: Prostaglandin E2 receptor EP1 subtype (402 aa).

The Extracellular segment spans residues 1–35 (MSPCGPLNLSLAGEATTCAAPWVPNTSAVPPSGAS). Asparagine 8 and asparagine 25 each carry an N-linked (GlcNAc...) asparagine glycan. Residues 36 to 62 (PALPIFSMTLGAVSNLLALALLAQAAG) form a helical membrane-spanning segment. Residues 63–72 (RLRRRRSAAT) lie on the Cytoplasmic side of the membrane. Residues 73 to 96 (FLLFVASLLATDLAGHVIPGALVL) form a helical membrane-spanning segment. Residues 97 to 111 (RLYTAGRAPAGGACH) lie on the Extracellular side of the membrane. A disulfide bond links cysteine 110 and cysteine 188. Residues 112-133 (FLGGCMVFFGLCPLLLGCGMAV) traverse the membrane as a helical segment. Topologically, residues 134–155 (ERCVGVTRPLLHAARVSVARAR) are cytoplasmic. Residues 156–177 (LALAAVAAVALAVALLPLARVG) form a helical membrane-spanning segment. Residues 178-201 (RYELQYPGTWCFIGLGPPGGWRQA) are Extracellular-facing. A helical transmembrane segment spans residues 202 to 227 (LLAGLFASLGLVALLAALVCNTLSGL). The Cytoplasmic segment spans residues 228-294 (ALLRARWRRR…ARRARAHDVE (67 aa)). The segment at 238–266 (SRRPPPASGPDSRRRWGAHGPRSASASSA) is disordered. A helical membrane pass occupies residues 295 to 321 (MVGQLVGIMVVSCICWSPMLVLVALAV). Over 322 to 332 (GGWSSTSLQRP) the chain is Extracellular. A helical transmembrane segment spans residues 333–354 (LFLAVRLASWNQILDPWVYILL). Topologically, residues 355 to 402 (RQAVLRQLLRLLPPRAGAKGGPAGLGLTPSAWEASSLRSSRHSGLSHF) are cytoplasmic.

This sequence belongs to the G-protein coupled receptor 1 family. Phosphorylated. Abundant in kidney. Lower level expression in lung, skeletal muscle and spleen, lowest expression in testis and not detected in liver brain and heart.

The protein resides in the cell membrane. In terms of biological role, receptor for prostaglandin E2 (PGE2). The activity of this receptor is mediated by G(q) proteins which activate a phosphatidylinositol-calcium second messenger system. May play a role as an important modulator of renal function. Implicated the smooth muscle contractile response to PGE2 in various tissues. The chain is Prostaglandin E2 receptor EP1 subtype (PTGER1) from Homo sapiens (Human).